The sequence spans 256 residues: MILEEIVNFKKEEVRKKKELKPYNELLNVNAVYRGDFKNSLNKGKVAIIGEIKRASPSKGIIREEFDLVEIAKTYEKAEVDAISVLTEKRFFKGEGGYIPQVKKLTTKPVLRKDFVIDEYQIYESKFLGADAVLLIVAILEDKLKGFCDIAKQIGLDVLVEVHEEEELETALKAGCDIIGINNRDLKTFKVDIKTTERLIKNIPKDKIVVSESGIKTPEDVLYLSSLGVKAVLIGESFMKMDEGRIKEFVKKVRGG.

This sequence belongs to the TrpC family.

It catalyses the reaction 1-(2-carboxyphenylamino)-1-deoxy-D-ribulose 5-phosphate + H(+) = (1S,2R)-1-C-(indol-3-yl)glycerol 3-phosphate + CO2 + H2O. Its pathway is amino-acid biosynthesis; L-tryptophan biosynthesis; L-tryptophan from chorismate: step 4/5. This chain is Indole-3-glycerol phosphate synthase, found in Caldanaerobacter subterraneus subsp. tengcongensis (strain DSM 15242 / JCM 11007 / NBRC 100824 / MB4) (Thermoanaerobacter tengcongensis).